The chain runs to 150 residues: UPF0336 protein SGR_2883 (150 aa).

A MaoC-like domain is found at 10 to 116 (RTYPPTPAYE…STIEAVKSLA (107 aa)).

This sequence belongs to the UPF0336 family.

This Streptomyces griseus subsp. griseus (strain JCM 4626 / CBS 651.72 / NBRC 13350 / KCC S-0626 / ISP 5235) protein is UPF0336 protein SGR_2883.